We begin with the raw amino-acid sequence, 482 residues long: Catalase (482 aa).

Residues histidine 53 and asparagine 126 contribute to the active site. Tyrosine 336 is a heme binding site.

It belongs to the catalase family. Heme serves as cofactor.

The protein resides in the periplasm. It catalyses the reaction 2 H2O2 = O2 + 2 H2O. In terms of biological role, decomposes hydrogen peroxide into water and oxygen; serves to protect cells from the toxic effects of hydrogen peroxide. Could protect cells in nodules which have a high potential to produce hydrogen peroxide because of the strong reducing conditions required for nitrogen fixation and the action of several proteins. The chain is Catalase (katA) from Aliivibrio fischeri (strain ATCC 700601 / ES114) (Vibrio fischeri).